Consider the following 162-residue polypeptide: Allophycocyanin beta chain (162 aa).

Asparagine 72 is modified (N4-methylasparagine). Cysteine 82 is a (2R,3E)-phycocyanobilin binding site.

Belongs to the phycobiliprotein family. Heterodimer of an alpha and a beta chain. Post-translationally, contains one covalently linked phycocyanobilin chromophore.

It is found in the cellular thylakoid membrane. Light-harvesting photosynthetic bile pigment-protein from the phycobiliprotein complex. Allophycocyanin has a maximum absorption at approximately 650 nanometers. In Microchaete diplosiphon (Fremyella diplosiphon), this protein is Allophycocyanin beta chain.